The chain runs to 289 residues: Shikimate dehydrogenase (NADP(+)) (289 aa).

Shikimate contacts are provided by residues 22–24 (SRS) and Thr-69. Lys-73 serves as the catalytic Proton acceptor. Residue Glu-85 participates in NADP(+) binding. Residues Asn-94 and Asp-109 each coordinate shikimate. Residues 134–138 (GAGGA), 158–163 (NRTLSR), and Ile-226 each bind NADP(+). Tyr-228 contributes to the shikimate binding site. Gly-249 is an NADP(+) binding site.

This sequence belongs to the shikimate dehydrogenase family. Homodimer.

The catalysed reaction is shikimate + NADP(+) = 3-dehydroshikimate + NADPH + H(+). It participates in metabolic intermediate biosynthesis; chorismate biosynthesis; chorismate from D-erythrose 4-phosphate and phosphoenolpyruvate: step 4/7. In terms of biological role, involved in the biosynthesis of the chorismate, which leads to the biosynthesis of aromatic amino acids. Catalyzes the reversible NADPH linked reduction of 3-dehydroshikimate (DHSA) to yield shikimate (SA). The polypeptide is Shikimate dehydrogenase (NADP(+)) (Brucella canis (strain ATCC 23365 / NCTC 10854 / RM-666)).